A 648-amino-acid chain; its full sequence is Acetyl-coenzyme A synthetase (648 aa).

Residues 191-194 (RGGR), Thr-310, and Asn-334 contribute to the CoA site. Residues 386–388 (GEP), 410–415 (DTWWQT), Asp-499, and Arg-514 contribute to the ATP site. Position 522 (Ser-522) interacts with CoA. Arg-525 contributes to the ATP binding site. Residues Val-536, His-538, and Ile-541 each contribute to the Mg(2+) site. Arg-583 lines the CoA pocket. Lys-608 carries the N6-acetyllysine modification.

This sequence belongs to the ATP-dependent AMP-binding enzyme family. The cofactor is Mg(2+). Post-translationally, acetylated. Deacetylation by the SIR2-homolog deacetylase activates the enzyme.

It catalyses the reaction acetate + ATP + CoA = acetyl-CoA + AMP + diphosphate. Its function is as follows. Catalyzes the conversion of acetate into acetyl-CoA (AcCoA), an essential intermediate at the junction of anabolic and catabolic pathways. AcsA undergoes a two-step reaction. In the first half reaction, AcsA combines acetate with ATP to form acetyl-adenylate (AcAMP) intermediate. In the second half reaction, it can then transfer the acetyl group from AcAMP to the sulfhydryl group of CoA, forming the product AcCoA. The chain is Acetyl-coenzyme A synthetase from Aeromonas hydrophila subsp. hydrophila (strain ATCC 7966 / DSM 30187 / BCRC 13018 / CCUG 14551 / JCM 1027 / KCTC 2358 / NCIMB 9240 / NCTC 8049).